A 60-amino-acid chain; its full sequence is Large ribosomal subunit protein uL30 (60 aa).

Belongs to the universal ribosomal protein uL30 family. In terms of assembly, part of the 50S ribosomal subunit.

This chain is Large ribosomal subunit protein uL30, found in Nocardioides sp. (strain ATCC BAA-499 / JS614).